Reading from the N-terminus, the 485-residue chain is Sphingosine kinase 1 (485 aa).

The DAGKc domain occupies Gly116–Thr258. ATP is bound by residues Asn126–Phe128 and Thr158. Substrate is bound at residue Ser183–Gly186. Asp185 acts as the Proton donor/acceptor in catalysis. Residues Glu190 and Gly215–Gly217 each bind ATP. Asp276 contributes to the substrate binding site. ATP contacts are provided by residues Arg283, Arg289, and Asp446–Glu448.

Mg(2+) serves as cofactor. In terms of tissue distribution, highly expressed in stems and flowers and at lower levels in roots, leaves and siliques.

The protein localises to the vacuole membrane. The catalysed reaction is a sphingoid base + ATP = a sphingoid 1-phosphate + ADP + H(+). Activated by phosphatidic acid (PA). Binding with PA stimulates the activity by promoting the binding of substrate to the catalytic site. Its function is as follows. Involved in the production of sphingolipid metabolites. Phosphorylates sphingosine and various sphingoid long-chain base (LCB) products, such as phytosphingosine (PHS, 4-hydroxysphinganine), 4-hydroxy-8-sphingenine, 4,8-sphingadienine, D-erythro-dihydrosphingosine and D,L-threo-dihydrosphingosine. Is required for abscisic acid (ABA) signaling that mediates stomatal closure, inhibition of seed germination and root elongation. May function upstream of PLDALPHA1 and phosphatidic acid (PA) in an amplification response to ABA that mediates stomatal closure. The protein is Sphingosine kinase 1 (SPHK1) of Arabidopsis thaliana (Mouse-ear cress).